The chain runs to 361 residues: Ferredoxin--NADP reductase 1 (361 aa).

The FAD site is built by Asp44, Gln52, Tyr57, Ala97, Phe142, Asp308, and Ser349.

The protein belongs to the ferredoxin--NADP reductase type 2 family. As to quaternary structure, homodimer. FAD is required as a cofactor.

The catalysed reaction is 2 reduced [2Fe-2S]-[ferredoxin] + NADP(+) + H(+) = 2 oxidized [2Fe-2S]-[ferredoxin] + NADPH. The chain is Ferredoxin--NADP reductase 1 from Cupriavidus necator (strain ATCC 17699 / DSM 428 / KCTC 22496 / NCIMB 10442 / H16 / Stanier 337) (Ralstonia eutropha).